The sequence spans 728 residues: Catalase-peroxidase (728 aa).

The segment at residues 91 to 218 is a cross-link (tryptophyl-tyrosyl-methioninium (Trp-Tyr) (with M-244)); that stretch reads WHSAGTYRTA…LAAVQMGLIY (128 aa). Histidine 92 functions as the Proton acceptor in the catalytic mechanism. The tryptophyl-tyrosyl-methioninium (Tyr-Met) (with W-91) cross-link spans 218-244; the sequence is YVNPEGPDGTPDPVAAAHDIRETFARM. Histidine 259 is a heme b binding site.

Belongs to the peroxidase family. Peroxidase/catalase subfamily. As to quaternary structure, homodimer or homotetramer. It depends on heme b as a cofactor. In terms of processing, formation of the three residue Trp-Tyr-Met cross-link is important for the catalase, but not the peroxidase activity of the enzyme.

It catalyses the reaction H2O2 + AH2 = A + 2 H2O. It carries out the reaction 2 H2O2 = O2 + 2 H2O. Functionally, bifunctional enzyme with both catalase and broad-spectrum peroxidase activity. The polypeptide is Catalase-peroxidase (Burkholderia lata (strain ATCC 17760 / DSM 23089 / LMG 22485 / NCIMB 9086 / R18194 / 383)).